We begin with the raw amino-acid sequence, 345 residues long: Calcium uniporter regulatory subunit MCUb, mitochondrial (345 aa).

The transit peptide at 1 to 44 (MPGALSGRRMLPSGLCLGRWQLLRTIRARGRGDPRELPSTPQVL) directs the protein to the mitochondrion. A coiled-coil region spans residues 188-221 (EIQKRRERHLMAKIDHLQEQLRPLEQVKAAIEAR). The next 2 helical transmembrane spans lie at 229–249 (LLWAGLALLSVQGGALAWLTW) and 259–279 (PVTFFLSFANSIVFFAYFIIT). Residues 306–334 (FDVEQYNKLKEDLAEATESLESVRRSLRL) are a coiled coil.

This sequence belongs to the MCU (TC 1.A.77) family. In terms of assembly, homooligomer. Associates with the uniplex complex, composed of MCU, MICU1, MICU2 and EMRE/SMDT1, inhibiting its activity. Detected in lung, brain and heart, and at lower levels in white fat, skeletal muscle and spleen. Detected at very low levels in kidney and liver. Highly expressed in macrophages during the progression of skeletal muscle regeneration.

It localises to the mitochondrion inner membrane. Its function is as follows. Negative regulator of the mitochondrial calcium uniporter (MCU), a channel that mediates calcium uptake into the mitochondrial matrix. MCUB is required to limit mitochondrial calcium overload during stress. Acts as a dominant-negative regulator that displaces MCU from the functional uniplex complex and thereby decreases the association of calcium sensors MICU1 and MICU2, preventing channel gating. Mitochondrial calcium homeostasis plays key roles in mitochondrial metabolism. Acts as an important regulator of mitochondrial metabolism in response to stress in muscle cells: induced in response to fasting, leading to restrict mitochondrial calcium uptake, resulting in reprogramming of mitochondria toward fatty acid oxidation preference. Acts as a regulator of macrophage polarization during skeletal muscle regeneration: inhibition of mitochondrial calcium uptake drives differentiation of macrophages with anti-inflammatory profile, promoting the differentiation and fusion of satellite cells. The chain is Calcium uniporter regulatory subunit MCUb, mitochondrial from Mus musculus (Mouse).